The primary structure comprises 398 residues: Phosphoglycerate kinase (398 aa).

Substrate contacts are provided by residues 21-23 (DFN), Arg-36, 59-62 (HLGR), Arg-119, and Arg-157. ATP is bound by residues Lys-208, Gly-296, Glu-327, and 354-357 (GGDS).

It belongs to the phosphoglycerate kinase family. As to quaternary structure, monomer.

The protein resides in the cytoplasm. The catalysed reaction is (2R)-3-phosphoglycerate + ATP = (2R)-3-phospho-glyceroyl phosphate + ADP. The protein operates within carbohydrate degradation; glycolysis; pyruvate from D-glyceraldehyde 3-phosphate: step 2/5. The polypeptide is Phosphoglycerate kinase (Streptococcus pneumoniae (strain Taiwan19F-14)).